The following is a 39-amino-acid chain: MAGTGRIPLWLVATVGGIAAITVLGIFIYGSYSGVGSSL.

The chain crosses the membrane as a helical span at residues 9-29; it reads LWLVATVGGIAAITVLGIFIY.

It belongs to the PsbJ family. In terms of assembly, PSII is composed of 1 copy each of membrane proteins PsbA, PsbB, PsbC, PsbD, PsbE, PsbF, PsbH, PsbI, PsbJ, PsbK, PsbL, PsbM, PsbT, PsbX, PsbY, PsbZ, Psb30/Ycf12, at least 3 peripheral proteins of the oxygen-evolving complex and a large number of cofactors. It forms dimeric complexes.

The protein localises to the plastid. The protein resides in the chloroplast thylakoid membrane. One of the components of the core complex of photosystem II (PSII). PSII is a light-driven water:plastoquinone oxidoreductase that uses light energy to abstract electrons from H(2)O, generating O(2) and a proton gradient subsequently used for ATP formation. It consists of a core antenna complex that captures photons, and an electron transfer chain that converts photonic excitation into a charge separation. The sequence is that of Photosystem II reaction center protein J from Pyropia yezoensis (Susabi-nori).